We begin with the raw amino-acid sequence, 318 residues long: Transaldolase (318 aa).

The active-site Schiff-base intermediate with substrate is Lys-126.

It belongs to the transaldolase family. Type 1 subfamily. Homodimer.

It is found in the cytoplasm. It carries out the reaction D-sedoheptulose 7-phosphate + D-glyceraldehyde 3-phosphate = D-erythrose 4-phosphate + beta-D-fructose 6-phosphate. It functions in the pathway carbohydrate degradation; pentose phosphate pathway; D-glyceraldehyde 3-phosphate and beta-D-fructose 6-phosphate from D-ribose 5-phosphate and D-xylulose 5-phosphate (non-oxidative stage): step 2/3. Transaldolase is important for the balance of metabolites in the pentose-phosphate pathway. This is Transaldolase from Cupriavidus metallidurans (strain ATCC 43123 / DSM 2839 / NBRC 102507 / CH34) (Ralstonia metallidurans).